A 286-amino-acid chain; its full sequence is uncharacterized protein (286 aa).

A run of 7 helical transmembrane segments spans residues 30-50 (LTFM…LTVQ), 68-88 (LSTI…VTAF), 99-119 (WFWA…GILL), 136-156 (IVYA…LSAL), 169-189 (LFHI…LSFI), 205-225 (IIPG…VYFV), and 254-274 (SALF…YFIL).

Its subcellular location is the cell membrane. This is an uncharacterized protein from Mycoplasma genitalium (strain ATCC 33530 / DSM 19775 / NCTC 10195 / G37) (Mycoplasmoides genitalium).